The following is a 305-amino-acid chain: uncharacterized protein (305 aa).

This is an uncharacterized protein from Sinorhizobium fredii (strain NBRC 101917 / NGR234).